The chain runs to 206 residues: Large ribosomal subunit protein uL4 (206 aa).

This sequence belongs to the universal ribosomal protein uL4 family. Part of the 50S ribosomal subunit.

Its function is as follows. One of the primary rRNA binding proteins, this protein initially binds near the 5'-end of the 23S rRNA. It is important during the early stages of 50S assembly. It makes multiple contacts with different domains of the 23S rRNA in the assembled 50S subunit and ribosome. Forms part of the polypeptide exit tunnel. In Afipia carboxidovorans (strain ATCC 49405 / DSM 1227 / KCTC 32145 / OM5) (Oligotropha carboxidovorans), this protein is Large ribosomal subunit protein uL4.